We begin with the raw amino-acid sequence, 224 residues long: UPF0758 protein Tola_0183 (224 aa).

An MPN domain is found at 102 to 224; the sequence is SLTSPQLVRR…PVSFAERGWL (123 aa). Zn(2+) is bound by residues H173, H175, and D186. The JAMM motif motif lies at 173 to 186; it reads HNHPSGVAEPSHAD.

Belongs to the UPF0758 family.

In Tolumonas auensis (strain DSM 9187 / NBRC 110442 / TA 4), this protein is UPF0758 protein Tola_0183.